Reading from the N-terminus, the 375-residue chain is D-aspartate oxidase (375 aa).

Residues 1-17 (MATVCVVGSGILGLAVA) form the signal peptide. FAD is bound by residues Ser9, Leu12, Asp34, Ser51, and Gly55. N-linked (GlcNAc...) asparagine glycosylation occurs at Asn203. 3 residues coordinate FAD: Arg322, Gly354, and Tyr355.

This sequence belongs to the DAMOX/DASOX family. It depends on FAD as a cofactor.

It carries out the reaction D-aspartate + O2 + H2O = oxaloacetate + H2O2 + NH4(+). The catalysed reaction is D-glutamate + O2 + H2O = H2O2 + 2-oxoglutarate + NH4(+). In terms of biological role, selectively catalyzes the oxidative deamination of acidic amino acids. Protects the organism from the toxicity of D-amino acids. Enables the organism to utilize D-amino acids as a source of nutrients. Enables the organism to utilize D-aspartate as a nitrogen source. This chain is D-aspartate oxidase (DDO), found in Komagataella phaffii (strain GS115 / ATCC 20864) (Yeast).